A 523-amino-acid chain; its full sequence is MKNLVLDNRFVHELPGDPNPSPDVRQVHGACYSRVMPTPVSAPHLIAWSPEVAALLGFDESDVRSPEFAAVFAGNALMPGMEPYAACYGGHQFGNWAGQLGDGRAITLGEAVTTRGDGHTGRWELQLKGAGPTPYSRHADGRAVLRSSIREFLCSEAMHHLGVPTTRALCLVGTGEKVVRDMFYDGRPKAEPGAVVCRVAPSFIRFGNFEIFTSRGDEALLTRLVDFTIARDFPELGGEPATRRAEWFCKVCERTARMIAQWMRVGFVHGVMNTDNMSILGLTIDYGPYGWIDNFDPGWTPNTTDAGGKRYRFGNQPHIAHWNLLQLANALYPVFGAAEPLHEGLDLYARVFDEENRRMLAAKLGFEAFGDEDATLVETLHALLTRAEVDMTIFFRGLASLDLEAPSIDPLRDAFYSAEKAAVAEPEMNSWLAAYTKRTKQERTPGDQRRVRMNAVNPRFVLRNYLAQEAIDAAEQGEYALVSELLDVMRHPYDEQPGRERFAARRPDWARNRAGCSMLSCSS.

ATP contacts are provided by Gly101, Gly103, Arg104, Lys128, Asp140, Gly141, Arg198, and Arg205. Asp275 (proton acceptor) is an active-site residue. Mg(2+)-binding residues include Asn276 and Asp285. Asp285 is an ATP binding site.

Belongs to the SELO family. Mg(2+) serves as cofactor. Mn(2+) is required as a cofactor.

It carries out the reaction L-seryl-[protein] + ATP = 3-O-(5'-adenylyl)-L-seryl-[protein] + diphosphate. It catalyses the reaction L-threonyl-[protein] + ATP = 3-O-(5'-adenylyl)-L-threonyl-[protein] + diphosphate. The catalysed reaction is L-tyrosyl-[protein] + ATP = O-(5'-adenylyl)-L-tyrosyl-[protein] + diphosphate. The enzyme catalyses L-histidyl-[protein] + UTP = N(tele)-(5'-uridylyl)-L-histidyl-[protein] + diphosphate. It carries out the reaction L-seryl-[protein] + UTP = O-(5'-uridylyl)-L-seryl-[protein] + diphosphate. It catalyses the reaction L-tyrosyl-[protein] + UTP = O-(5'-uridylyl)-L-tyrosyl-[protein] + diphosphate. In terms of biological role, nucleotidyltransferase involved in the post-translational modification of proteins. It can catalyze the addition of adenosine monophosphate (AMP) or uridine monophosphate (UMP) to a protein, resulting in modifications known as AMPylation and UMPylation. The polypeptide is Protein nucleotidyltransferase YdiU (Aromatoleum aromaticum (strain DSM 19018 / LMG 30748 / EbN1) (Azoarcus sp. (strain EbN1))).